A 381-amino-acid polypeptide reads, in one-letter code: Chaperone protein DnaJ (381 aa).

The 66-residue stretch at 5–70 (DFYEVLGVGR…QKKAAYDQYG (66 aa)) folds into the J domain. Residues 136–214 (GCSKEIEVPT…CHGQGRKQKT (79 aa)) form a CR-type zinc finger. Cys149, Cys152, Cys166, Cys169, Cys188, Cys191, Cys202, and Cys205 together coordinate Zn(2+). CXXCXGXG motif repeat units lie at residues 149 to 156 (CDACDGSG), 166 to 173 (CGTCHGHG), 188 to 195 (CPTCHGKG), and 202 to 209 (CNVCHGQG).

The protein belongs to the DnaJ family. As to quaternary structure, homodimer. It depends on Zn(2+) as a cofactor.

It is found in the cytoplasm. Participates actively in the response to hyperosmotic and heat shock by preventing the aggregation of stress-denatured proteins and by disaggregating proteins, also in an autonomous, DnaK-independent fashion. Unfolded proteins bind initially to DnaJ; upon interaction with the DnaJ-bound protein, DnaK hydrolyzes its bound ATP, resulting in the formation of a stable complex. GrpE releases ADP from DnaK; ATP binding to DnaK triggers the release of the substrate protein, thus completing the reaction cycle. Several rounds of ATP-dependent interactions between DnaJ, DnaK and GrpE are required for fully efficient folding. Also involved, together with DnaK and GrpE, in the DNA replication of plasmids through activation of initiation proteins. This Vibrio cholerae serotype O1 (strain ATCC 39541 / Classical Ogawa 395 / O395) protein is Chaperone protein DnaJ.